A 221-amino-acid polypeptide reads, in one-letter code: Transmembrane emp24 domain-containing protein 3 (221 aa).

Positions 1 to 25 are cleaved as a signal peptide; it reads MVHEAPHASSFQMLLQLLLLLLLRA. At 28-184 the chain is on the lumenal side; the sequence is LRSAELTFEL…RAEDLNSRVS (157 aa). A GOLD domain is found at 42–124; it reads KQCFHEEVEQ…HKTVYFDFQV (83 aa). R103 carries the dimethylated arginine modification. A helical membrane pass occupies residues 185 to 205; it reads YWSVGETIALFVVSFSQVLLL. Residues 206–221 lie on the Cytoplasmic side of the membrane; sequence KSFFTEKRPVNRAVHS. Positions 208 to 209 match the COPII vesicle coat-binding motif; that stretch reads FF. The COPI vesicle coat-binding signature appears at 208–221; sequence FFTEKRPVNRAVHS.

The protein belongs to the EMP24/GP25L family. Monomer in endoplasmic reticulum, endoplasmic reticulum-Golgi intermediate compartment and cis-Golgi network. Interacts (via C-terminus) with COPG1; the interaction involves dimeric TMED3; however, there are conflicting reports on the interaction. Interacts with GORASP1 and GORASP2.

Its subcellular location is the endoplasmic reticulum-Golgi intermediate compartment membrane. The protein localises to the golgi apparatus. It localises to the cis-Golgi network membrane. It is found in the golgi stack membrane. The protein resides in the endoplasmic reticulum membrane. Its subcellular location is the cytoplasmic vesicle. The protein localises to the COPI-coated vesicle membrane. In terms of biological role, potential role in vesicular protein trafficking, mainly in the early secretory pathway. Contributes to the coupled localization of TMED2 and TMED10 in the cis-Golgi network. This chain is Transmembrane emp24 domain-containing protein 3 (Tmed3), found in Mus musculus (Mouse).